We begin with the raw amino-acid sequence, 94 residues long: Integration host factor subunit beta (94 aa).

The protein belongs to the bacterial histone-like protein family. As to quaternary structure, heterodimer of an alpha and a beta chain.

In terms of biological role, this protein is one of the two subunits of integration host factor, a specific DNA-binding protein that functions in genetic recombination as well as in transcriptional and translational control. This Xanthobacter autotrophicus (strain ATCC BAA-1158 / Py2) protein is Integration host factor subunit beta.